A 487-amino-acid chain; its full sequence is Acetyl-coenzyme A carboxylase carboxyl transferase subunit beta, chloroplastic (487 aa).

The CoA carboxyltransferase N-terminal domain maps to 223-487 (LWIQCDNCYG…FCPLNKTEIK (265 aa)). 4 residues coordinate Zn(2+): cysteine 227, cysteine 230, cysteine 243, and cysteine 246. The segment at 227–246 (CDNCYGLMYKKVKMNVCEQC) adopts a C4-type zinc-finger fold.

It belongs to the AccD/PCCB family. Acetyl-CoA carboxylase is a heterohexamer composed of biotin carboxyl carrier protein, biotin carboxylase and 2 subunits each of ACCase subunit alpha and ACCase plastid-coded subunit beta (accD). It depends on Zn(2+) as a cofactor.

The protein resides in the plastid. The protein localises to the chloroplast stroma. It catalyses the reaction N(6)-carboxybiotinyl-L-lysyl-[protein] + acetyl-CoA = N(6)-biotinyl-L-lysyl-[protein] + malonyl-CoA. The protein operates within lipid metabolism; malonyl-CoA biosynthesis; malonyl-CoA from acetyl-CoA: step 1/1. In terms of biological role, component of the acetyl coenzyme A carboxylase (ACC) complex. Biotin carboxylase (BC) catalyzes the carboxylation of biotin on its carrier protein (BCCP) and then the CO(2) group is transferred by the transcarboxylase to acetyl-CoA to form malonyl-CoA. In Nasturtium officinale (Watercress), this protein is Acetyl-coenzyme A carboxylase carboxyl transferase subunit beta, chloroplastic.